Consider the following 309-residue polypeptide: 4-hydroxy-3-methylbut-2-enyl diphosphate reductase (309 aa).

C13 contributes to the [4Fe-4S] cluster binding site. Positions 42 and 75 each coordinate (2E)-4-hydroxy-3-methylbut-2-enyl diphosphate. 2 residues coordinate dimethylallyl diphosphate: H42 and H75. Isopentenyl diphosphate is bound by residues H42 and H75. C97 is a [4Fe-4S] cluster binding site. H125 provides a ligand contact to (2E)-4-hydroxy-3-methylbut-2-enyl diphosphate. Position 125 (H125) interacts with dimethylallyl diphosphate. H125 is an isopentenyl diphosphate binding site. E127 acts as the Proton donor in catalysis. T165 contacts (2E)-4-hydroxy-3-methylbut-2-enyl diphosphate. C195 lines the [4Fe-4S] cluster pocket. Positions 223, 224, 225, and 267 each coordinate (2E)-4-hydroxy-3-methylbut-2-enyl diphosphate. 4 residues coordinate dimethylallyl diphosphate: S223, S224, N225, and S267. Isopentenyl diphosphate is bound by residues S223, S224, N225, and S267.

The protein belongs to the IspH family. Requires [4Fe-4S] cluster as cofactor.

It catalyses the reaction isopentenyl diphosphate + 2 oxidized [2Fe-2S]-[ferredoxin] + H2O = (2E)-4-hydroxy-3-methylbut-2-enyl diphosphate + 2 reduced [2Fe-2S]-[ferredoxin] + 2 H(+). The catalysed reaction is dimethylallyl diphosphate + 2 oxidized [2Fe-2S]-[ferredoxin] + H2O = (2E)-4-hydroxy-3-methylbut-2-enyl diphosphate + 2 reduced [2Fe-2S]-[ferredoxin] + 2 H(+). The protein operates within isoprenoid biosynthesis; dimethylallyl diphosphate biosynthesis; dimethylallyl diphosphate from (2E)-4-hydroxy-3-methylbutenyl diphosphate: step 1/1. It participates in isoprenoid biosynthesis; isopentenyl diphosphate biosynthesis via DXP pathway; isopentenyl diphosphate from 1-deoxy-D-xylulose 5-phosphate: step 6/6. Functionally, catalyzes the conversion of 1-hydroxy-2-methyl-2-(E)-butenyl 4-diphosphate (HMBPP) into a mixture of isopentenyl diphosphate (IPP) and dimethylallyl diphosphate (DMAPP). Acts in the terminal step of the DOXP/MEP pathway for isoprenoid precursor biosynthesis. The polypeptide is 4-hydroxy-3-methylbut-2-enyl diphosphate reductase (Chlamydia caviae (strain ATCC VR-813 / DSM 19441 / 03DC25 / GPIC) (Chlamydophila caviae)).